The following is a 103-amino-acid chain: N(4)-acetylcytidine amidohydrolase (103 aa).

The ASCH domain occupies 6–92; that stretch reads TFFERFEQDI…VIQEIYPGLE (87 aa). Lysine 20 functions as the Proton acceptor in the catalytic mechanism. The Nucleophile role is filled by threonine 23. Glutamate 73 (proton donor) is an active-site residue.

Belongs to the N(4)-acetylcytidine amidohydrolase family.

The enzyme catalyses N(4)-acetylcytidine + H2O = cytidine + acetate + H(+). It carries out the reaction N(4)-acetyl-2'-deoxycytidine + H2O = 2'-deoxycytidine + acetate + H(+). The catalysed reaction is N(4)-acetylcytosine + H2O = cytosine + acetate + H(+). Functionally, catalyzes the hydrolysis of N(4)-acetylcytidine (ac4C). The sequence is that of N(4)-acetylcytidine amidohydrolase from Shewanella sp. (strain MR-4).